The chain runs to 189 residues: Protein GrpE (189 aa).

Positions 1-10 (MADEQQQTLD) are enriched in polar residues. Residues 1–21 (MADEQQQTLDPQAPEQTDAPE) are disordered.

The protein belongs to the GrpE family. As to quaternary structure, homodimer.

It is found in the cytoplasm. Functionally, participates actively in the response to hyperosmotic and heat shock by preventing the aggregation of stress-denatured proteins, in association with DnaK and GrpE. It is the nucleotide exchange factor for DnaK and may function as a thermosensor. Unfolded proteins bind initially to DnaJ; upon interaction with the DnaJ-bound protein, DnaK hydrolyzes its bound ATP, resulting in the formation of a stable complex. GrpE releases ADP from DnaK; ATP binding to DnaK triggers the release of the substrate protein, thus completing the reaction cycle. Several rounds of ATP-dependent interactions between DnaJ, DnaK and GrpE are required for fully efficient folding. The chain is Protein GrpE from Pseudomonas paraeruginosa (strain DSM 24068 / PA7) (Pseudomonas aeruginosa (strain PA7)).